The following is a 251-amino-acid chain: GTP cyclohydrolase 1 type 2 homolog (251 aa).

A divalent metal cation contacts are provided by histidine 64, histidine 65, aspartate 102, histidine 219, and glutamate 223.

It belongs to the GTP cyclohydrolase I type 2/NIF3 family. As to quaternary structure, homohexamer.

This chain is GTP cyclohydrolase 1 type 2 homolog, found in Chlamydia pneumoniae (Chlamydophila pneumoniae).